The following is a 353-amino-acid chain: N-acetyl-gamma-glutamyl-phosphate reductase (353 aa).

The active site involves Cys157.

This sequence belongs to the NAGSA dehydrogenase family. Type 1 subfamily.

The protein resides in the cytoplasm. It carries out the reaction N-acetyl-L-glutamate 5-semialdehyde + phosphate + NADP(+) = N-acetyl-L-glutamyl 5-phosphate + NADPH + H(+). It participates in amino-acid biosynthesis; L-arginine biosynthesis; N(2)-acetyl-L-ornithine from L-glutamate: step 3/4. In terms of biological role, catalyzes the NADPH-dependent reduction of N-acetyl-5-glutamyl phosphate to yield N-acetyl-L-glutamate 5-semialdehyde. The polypeptide is N-acetyl-gamma-glutamyl-phosphate reductase (Bordetella avium (strain 197N)).